The chain runs to 393 residues: Formate-dependent phosphoribosylglycinamide formyltransferase (393 aa).

N(1)-(5-phospho-beta-D-ribosyl)glycinamide is bound by residues 22-23 (EL) and Glu-82. ATP-binding positions include Arg-114, Lys-155, 160–165 (SSGHGQ), 195–198 (EGFI), and Glu-203. Residues 119–308 (RLAAEELGLK…QFALHARAIL (190 aa)) form the ATP-grasp domain. Glu-267 and Glu-279 together coordinate Mg(2+). N(1)-(5-phospho-beta-D-ribosyl)glycinamide contacts are provided by residues Asp-286, Lys-356, and 363-364 (RR).

Belongs to the PurK/PurT family. As to quaternary structure, homodimer.

The enzyme catalyses N(1)-(5-phospho-beta-D-ribosyl)glycinamide + formate + ATP = N(2)-formyl-N(1)-(5-phospho-beta-D-ribosyl)glycinamide + ADP + phosphate + H(+). The protein operates within purine metabolism; IMP biosynthesis via de novo pathway; N(2)-formyl-N(1)-(5-phospho-D-ribosyl)glycinamide from N(1)-(5-phospho-D-ribosyl)glycinamide (formate route): step 1/1. In terms of biological role, involved in the de novo purine biosynthesis. Catalyzes the transfer of formate to 5-phospho-ribosyl-glycinamide (GAR), producing 5-phospho-ribosyl-N-formylglycinamide (FGAR). Formate is provided by PurU via hydrolysis of 10-formyl-tetrahydrofolate. The sequence is that of Formate-dependent phosphoribosylglycinamide formyltransferase from Actinobacillus pleuropneumoniae serotype 3 (strain JL03).